We begin with the raw amino-acid sequence, 362 residues long: tRNA-specific 2-thiouridylase MnmA (362 aa).

Residues 13–20 (GLSGGVDS) and Met-39 each bind ATP. Positions 99-101 (NPD) are interaction with target base in tRNA. The active-site Nucleophile is the Cys-104. A disulfide bridge connects residues Cys-104 and Cys-200. Gly-128 serves as a coordination point for ATP. Residues 150–152 (KDQ) form an interaction with tRNA region. The active-site Cysteine persulfide intermediate is Cys-200. The interaction with tRNA stretch occupies residues 310-311 (RY).

The protein belongs to the MnmA/TRMU family.

The protein resides in the cytoplasm. It carries out the reaction S-sulfanyl-L-cysteinyl-[protein] + uridine(34) in tRNA + AH2 + ATP = 2-thiouridine(34) in tRNA + L-cysteinyl-[protein] + A + AMP + diphosphate + H(+). Catalyzes the 2-thiolation of uridine at the wobble position (U34) of tRNA, leading to the formation of s(2)U34. The chain is tRNA-specific 2-thiouridylase MnmA from Vesicomyosocius okutanii subsp. Calyptogena okutanii (strain HA).